The following is a 329-amino-acid chain: 4-hydroxythreonine-4-phosphate dehydrogenase (329 aa).

2 residues coordinate substrate: His-136 and Thr-137. The a divalent metal cation site is built by His-166, His-211, and His-266. Residues Lys-274, Asn-283, and Arg-292 each contribute to the substrate site.

This sequence belongs to the PdxA family. As to quaternary structure, homodimer. Requires Zn(2+) as cofactor. It depends on Mg(2+) as a cofactor. Co(2+) serves as cofactor.

Its subcellular location is the cytoplasm. The enzyme catalyses 4-(phosphooxy)-L-threonine + NAD(+) = 3-amino-2-oxopropyl phosphate + CO2 + NADH. Its pathway is cofactor biosynthesis; pyridoxine 5'-phosphate biosynthesis; pyridoxine 5'-phosphate from D-erythrose 4-phosphate: step 4/5. Functionally, catalyzes the NAD(P)-dependent oxidation of 4-(phosphooxy)-L-threonine (HTP) into 2-amino-3-oxo-4-(phosphooxy)butyric acid which spontaneously decarboxylates to form 3-amino-2-oxopropyl phosphate (AHAP). The protein is 4-hydroxythreonine-4-phosphate dehydrogenase of Escherichia coli O81 (strain ED1a).